The primary structure comprises 205 residues: Cerebellin-3 (205 aa).

Positions 1–32 (MLGTKRHWPPGPSLSLELPLALTLLALRAGWA) are cleaved as a signal peptide. In terms of domain architecture, C1q spans 67 to 205 (APPGRVAFAA…SFSGFLIFPL (139 aa)). N90 carries N-linked (GlcNAc...) asparagine glycosylation.

Heterohexamer; disulfide-linked heterotrimers. Interacts with CBLN1. May also form oligomers with CBLN2 and CBLN4.

Its subcellular location is the endoplasmic reticulum. The protein localises to the golgi apparatus. It is found in the cis-Golgi network. It localises to the secreted. The protein resides in the synapse. In terms of biological role, may be involved in synaptic functions in the CNS. The chain is Cerebellin-3 (CBLN3) from Bos taurus (Bovine).